The primary structure comprises 189 residues: H/ACA ribonucleoprotein complex subunit 1-like protein 2 (189 aa).

The span at 1–12 shows a compositional bias: gly residues; the sequence is MRPPRGGGSFRG. 2 disordered regions span residues 1 to 39 and 129 to 189; these read MRPP…NYDE and RFLP…RGRA. Low complexity predominate over residues 162 to 177; that stretch reads GRGAPRGASRGFQPRG.

This sequence belongs to the GAR1 family. Component of the small nucleolar ribonucleoprotein particle containing H/ACA-type snoRNAs (H/ACA snoRNPs).

The protein resides in the nucleus. Its subcellular location is the nucleolus. Required for ribosome biogenesis. Part of a complex which catalyzes pseudouridylation of rRNA. This involves the isomerization of uridine such that the ribose is subsequently attached to C5, instead of the normal N1. Pseudouridine ('psi') residues may serve to stabilize the conformation of rRNAs. The sequence is that of H/ACA ribonucleoprotein complex subunit 1-like protein 2 from Arabidopsis thaliana (Mouse-ear cress).